The sequence spans 384 residues: Spermidine/putrescine import ATP-binding protein PotA (384 aa).

In terms of domain architecture, ABC transporter spans 6 to 238; the sequence is IAFQNVSKVF…PINHFVATFI (233 aa). Position 40–47 (40–47) interacts with ATP; sequence GASGSGKS.

The protein belongs to the ABC transporter superfamily. Spermidine/putrescine importer (TC 3.A.1.11.1) family. The complex is composed of two ATP-binding proteins (PotA), two transmembrane proteins (PotB and PotC) and a solute-binding protein (PotD).

It localises to the cell membrane. It carries out the reaction ATP + H2O + polyamine-[polyamine-binding protein]Side 1 = ADP + phosphate + polyamineSide 2 + [polyamine-binding protein]Side 1.. Functionally, part of the ABC transporter complex PotABCD involved in spermidine/putrescine import. Responsible for energy coupling to the transport system. In Streptococcus thermophilus (strain ATCC BAA-491 / LMD-9), this protein is Spermidine/putrescine import ATP-binding protein PotA.